The primary structure comprises 357 residues: Alanine racemase (357 aa).

Residue K35 is the Proton acceptor; specific for D-alanine of the active site. K35 bears the N6-(pyridoxal phosphate)lysine mark. A substrate-binding site is contributed by R131. Y256 (proton acceptor; specific for L-alanine) is an active-site residue. M304 contacts substrate.

It belongs to the alanine racemase family. Pyridoxal 5'-phosphate is required as a cofactor.

The enzyme catalyses L-alanine = D-alanine. It functions in the pathway amino-acid biosynthesis; D-alanine biosynthesis; D-alanine from L-alanine: step 1/1. Functionally, catalyzes the interconversion of L-alanine and D-alanine. May also act on other amino acids. This is Alanine racemase (alr) from Legionella pneumophila (strain Lens).